Consider the following 297-residue polypeptide: MSHSDQSQRFLFDDTDVRGEMVDLERSYSEVLAKHPYPEPVAQLLGEMLAAASLLCGTLKFDGLLVLQARSSGAVPLLMVECSSDRQVRGLARYSAEAIGAGAGMQELMPEGVLTLTVDPVKGQRYQGIVALEGVNLAECLSNYFASSEQLPTRFWLNADGRRARGLLLQQLPADRLKDPEAREASWQHLTTLADTLTAEELLALDNETVLHRLYHEETVRLFEPQPLVFHCSCSRERSANALVSLGQADCERLLEEEEGAITIDCQFCNQRYLFDASDVAQLFAGAGSQGPSATRH.

Cystine bridges form between C232/C234 and C266/C269.

This sequence belongs to the HSP33 family. Under oxidizing conditions two disulfide bonds are formed involving the reactive cysteines. Under reducing conditions zinc is bound to the reactive cysteines and the protein is inactive.

The protein resides in the cytoplasm. Functionally, redox regulated molecular chaperone. Protects both thermally unfolding and oxidatively damaged proteins from irreversible aggregation. Plays an important role in the bacterial defense system toward oxidative stress. In Pseudomonas paraeruginosa (strain DSM 24068 / PA7) (Pseudomonas aeruginosa (strain PA7)), this protein is 33 kDa chaperonin.